The primary structure comprises 657 residues: Regulator of MON1-CCZ1 complex (657 aa).

The region spanning 471 to 637 (NKEMPHKFVI…NFTPGEHCEE (167 aa)) is the Mic1 domain.

Belongs to the RMC1 family. In terms of assembly, found in a complex with RMC1, CCZ1, MON1A and MON1B. In terms of tissue distribution, highly expressed in heart, brain, spleen, lung, liver, skeletal muscle, kidney and testis.

The protein resides in the lysosome membrane. It localises to the late endosome membrane. Its function is as follows. Component of the CCZ1-MON1 RAB7A guanine exchange factor (GEF). Acts as a positive regulator of CCZ1-MON1A/B function necessary for endosomal/autophagic flux and efficient RAB7A localization. The sequence is that of Regulator of MON1-CCZ1 complex (Rmc1) from Mus musculus (Mouse).